The following is a 136-amino-acid chain: UPF0216 protein PH0358 (136 aa).

Belongs to the UPF0216 family.

The sequence is that of UPF0216 protein PH0358 from Pyrococcus horikoshii (strain ATCC 700860 / DSM 12428 / JCM 9974 / NBRC 100139 / OT-3).